We begin with the raw amino-acid sequence, 789 residues long: Phenylalanine--tRNA ligase beta subunit (789 aa).

In terms of domain architecture, tRNA-binding spans 39 to 149 (ADGLEAFRIA…HEAPVGQSYV (111 aa)). The region spanning 399–471 (SAVPVISYDP…RIEGLDNVPS (73 aa)) is the B5 domain. D449, D455, and D459 together coordinate Mg(2+). The 93-residue stretch at 696–788 (SMLQPVFRDF…AAAKKGARLR (93 aa)) folds into the FDX-ACB domain.

Belongs to the phenylalanyl-tRNA synthetase beta subunit family. Type 1 subfamily. Tetramer of two alpha and two beta subunits. It depends on Mg(2+) as a cofactor.

The protein resides in the cytoplasm. It carries out the reaction tRNA(Phe) + L-phenylalanine + ATP = L-phenylalanyl-tRNA(Phe) + AMP + diphosphate + H(+). The polypeptide is Phenylalanine--tRNA ligase beta subunit (Zymomonas mobilis subsp. mobilis (strain ATCC 31821 / ZM4 / CP4)).